The primary structure comprises 361 residues: Peptide chain release factor 1 (361 aa).

An N5-methylglutamine modification is found at Gln235.

This sequence belongs to the prokaryotic/mitochondrial release factor family. Post-translationally, methylated by PrmC. Methylation increases the termination efficiency of RF1.

The protein localises to the cytoplasm. Peptide chain release factor 1 directs the termination of translation in response to the peptide chain termination codons UAG and UAA. The polypeptide is Peptide chain release factor 1 (Azoarcus sp. (strain BH72)).